The following is a 683-amino-acid chain: Cyclic nucleotide-gated channel alpha-1 (683 aa).

At 1–160 (MKTNIINTWH…PSGNMYYNWL (160 aa)) the chain is on the cytoplasmic side. Residues 34–144 (ACSSFSDNDN…PKEKKEEEKK (111 aa)) are disordered. Over residues 105–144 (SKADDKKESKKDPEKKKKKEKEKEKKKEEKPKEKKEEEKK) the composition is skewed to basic and acidic residues. The chain crosses the membrane as a helical span at residues 161–182 (FCITLPVMYNWTMIIARACFDE). The Extracellular portion of the chain corresponds to 183–192 (LQSDYLEYWL). A helical membrane pass occupies residues 193-213 (IFDYVSDVVYLADMFVRTRTG). Residues 214-238 (YLEQGLLVKDELKLIEKYKANLQFK) are Cytoplasmic-facing. A helical membrane pass occupies residues 239-257 (LDVLSVIPTDLLYFKFGWN). The Extracellular portion of the chain corresponds to 258-262 (YPEIR). A helical transmembrane segment spans residues 263–281 (LNRLLRISRMFEFFQRTET). The Cytoplasmic segment spans residues 282–288 (RTNYPNI). Residues 286–394 (PNIFRISNLV…GNIGSMISNM (109 aa)) form an ion conduction pathway region. Residues 289–312 (FRISNLVMYIVIIIHWNACVYYSI) traverse the membrane as a helical segment. The Extracellular segment spans residues 313–335 (SKAIGFGNDTWVYPDVNDPEFGR). An N-linked (GlcNAc...) asparagine glycan is attached at Asn320. A run of 2 helical transmembrane segments spans residues 336-370 (LARK…VFVV) and 371-395 (VDFL…SNMN). The interval 353-356 (TIGE) is selectivity filter. The interval 396 to 472 (AARAEFQSRV…DTLKKVRIFA (77 aa)) is C-linker. Residues 396 to 683 (AARAEFQSRV…ESEPTESLQG (288 aa)) lie on the Cytoplasmic side of the membrane. Residues 476–596 (AGLLVELVLK…EEKGRQILMK (121 aa)) form a cyclic nucleotide-binding domain region. 3',5'-cyclic GMP is bound by residues Gly536, Ser539, Arg552, and Thr553. The 3',5'-cyclic AMP site is built by Arg552 and Thr553. Residues 614-668 (LEEKVTRMEGSVDLLQTRFARILAEYESMQQKLKQRLTKVEKFLKPLIETEFSAL) are a coiled coil.

The protein belongs to the cyclic nucleotide-gated cation channel (TC 1.A.1.5) family. CNGA1 subfamily. As to quaternary structure, forms heterotetrameric channels composed of CNGA1 and CNGB1 subunits with 3:1 stoichiometry. May also form cyclic nucleotide-activated homotetrameric channels, that are efficiently activated by saturating cGMP, but poorly activated by saturating cAMP compared to the heterotetramer with CNGB1. The channel binds Ca(2+)-bound CALM1 via CaM1 and CaM2 regions of the CNGB1 subunit; this interaction modulates the affinity of the channel for cNMPs in response to intracellular Ca(2+) levels. As to expression, rod cells in the retina.

Its subcellular location is the cell membrane. The catalysed reaction is Ca(2+)(in) = Ca(2+)(out). It carries out the reaction Na(+)(in) = Na(+)(out). It catalyses the reaction K(+)(in) = K(+)(out). The enzyme catalyses NH4(+)(in) = NH4(+)(out). The catalysed reaction is Rb(+)(in) = Rb(+)(out). It carries out the reaction Li(+)(in) = Li(+)(out). It catalyses the reaction Cs(+)(in) = Cs(+)(out). Its function is as follows. Pore-forming subunit of the rod cyclic nucleotide-gated channel. Mediates rod photoresponses at dim light converting transient changes in intracellular cGMP levels into electrical signals. In the dark, cGMP levels are high and keep the channel open enabling a steady inward current carried by Na(+) and Ca(2+) ions that leads to membrane depolarization and neurotransmitter release from synaptic terminals. Upon photon absorption cGMP levels decline leading to channel closure and membrane hyperpolarization that ultimately slows neurotransmitter release and signals the presence of light, the end point of the phototransduction cascade. Conducts cGMP- and cAMP-gated ion currents, with permeability for monovalent and divalent cations. The selectivity for Ca(2+) over Na(+) increases with cGMP concentrations, whereas the selectivity among monovalent ions is independent of the cGMP levels. In Rattus norvegicus (Rat), this protein is Cyclic nucleotide-gated channel alpha-1.